The chain runs to 101 residues: Small ribosomal subunit protein uS14 (101 aa).

The tract at residues 36-72 is disordered; the sequence is GTDESREAARAGIQRLPRDASPIRVRNRDGIDGRPRG. Residues 61–70 are compositionally biased toward basic and acidic residues; that stretch reads RNRDGIDGRP.

Belongs to the universal ribosomal protein uS14 family. Part of the 30S ribosomal subunit. Contacts proteins S3 and S10.

In terms of biological role, binds 16S rRNA, required for the assembly of 30S particles and may also be responsible for determining the conformation of the 16S rRNA at the A site. This chain is Small ribosomal subunit protein uS14, found in Clavibacter michiganensis subsp. michiganensis (strain NCPPB 382).